The sequence spans 788 residues: MSNIKTRLQKARSKFSRRNSEASTRARSIASSAGSDRHGHAPPPPLSSPLRKSVSLPRLAEPAASGKALGLGAHGDDDDDEQLLVVGRAATESQADAEASTGSLNTSRDGRSSCTQASTAPSSSHDARKPSADVPIVCPQVTLDAPTPVHPGAPPAELDRPALPDSLSSTPSSVPATTTTTATTTATTTSLPPSPARVHRHAAITTAHAADARLATNLPGPDDSQAATPSGPPPSTARSAAMLHRKIWVKRPNASATLVQIREDDLVDDVRDMILKKYANSLGRSFDAPDVTLRIVPRDSQRAGERTLGPEEDMCRTIDAYFPGGQTVHEALIIDVPSRRTPKPSPRVPPYYHHEDGIHPQTEYFPPMSAMTPSPATMSTSLQHPHDNRIPVPQLHSISVLNTGQLPNLPSPGSTRRGPMHPHRPKYNRTHTASPTTLGGGIPSSATSVRPANRPRHDSSASEAKNSAASNNPIPTPPIPADPTPHQQTLQTSTPPTPRISSPQLNTKKKRRKAPVEPPALPAGLLDGSVPPINVLIVEDNIINLRVLGAFMQRLKVRWQRAMNGKEAVTKWKAGGFHLVLMDIQLPVMNGLEATKEIRRLERVNGIGVFSSGSSEAPNTRLGSDSKSQDELREDDKLGDKGMFKSPVIIVALTASSLQSDRHEALAAGCNDFLTKPVNFVWLERKVKEWGCMQALIDFDGWRKWKDFADKSENNDTTSKLSGSFTSVAPNKKAANTSPTTATSETNGVKKDAETERKNKRKSLGVVPQPVLREEAEPQPAEVDSGDN.

The 158-residue stretch at 534 to 691 folds into the Response regulatory domain; it reads NVLIVEDNII…WLERKVKEWG (158 aa). Position 583 is a 4-aspartylphosphate (Asp-583).

Belongs to the SSK1 family.

The protein localises to the cytoplasm. Functionally, two-domain response regulator protein in the two-component signal transduction system of the HOG1 pathway. Controls high-osmolarity adaptation and fungicide sensitivity via its regulation of the phosphorylation of HOG1. The protein is Response regulator SSK1 of Cochliobolus heterostrophus (strain C5 / ATCC 48332 / race O) (Southern corn leaf blight fungus).